A 444-amino-acid polypeptide reads, in one-letter code: Adenylosuccinate synthetase (444 aa).

GTP-binding positions include 12 to 18 and 40 to 42; these read GDEGKGK and GHT. The active-site Proton acceptor is the aspartate 13. Mg(2+) contacts are provided by aspartate 13 and glycine 40. Residues 13–16, 38–41, threonine 128, arginine 142, glutamine 223, threonine 238, and arginine 302 each bind IMP; these read DEGK and NAGH. Histidine 41 acts as the Proton donor in catalysis. Residue 298-304 coordinates substrate; that stretch reads TTTGRRR. Residues arginine 304, 330-332, and 412-414 contribute to the GTP site; these read KLD and SLG.

It belongs to the adenylosuccinate synthetase family. In terms of assembly, homodimer. The cofactor is Mg(2+).

The protein localises to the cytoplasm. The enzyme catalyses IMP + L-aspartate + GTP = N(6)-(1,2-dicarboxyethyl)-AMP + GDP + phosphate + 2 H(+). The protein operates within purine metabolism; AMP biosynthesis via de novo pathway; AMP from IMP: step 1/2. Functionally, plays an important role in the de novo pathway of purine nucleotide biosynthesis. Catalyzes the first committed step in the biosynthesis of AMP from IMP. The polypeptide is Adenylosuccinate synthetase (Synechococcus elongatus (strain ATCC 33912 / PCC 7942 / FACHB-805) (Anacystis nidulans R2)).